The chain runs to 275 residues: NAD(P)H-hydrate epimerase (275 aa).

The region spanning 49–258 (AIKIDQELFS…ALAAKYELNL (210 aa)) is the YjeF N-terminal domain. Position 102-106 (102-106 (NNGGD)) interacts with (6S)-NADPHX. The K(+) site is built by asparagine 103 and aspartate 167. Residues 171–177 (GFSFKPP) and aspartate 200 each bind (6S)-NADPHX. Serine 203 contributes to the K(+) binding site.

This sequence belongs to the NnrE/AIBP family. It depends on K(+) as a cofactor.

The catalysed reaction is (6R)-NADHX = (6S)-NADHX. It catalyses the reaction (6R)-NADPHX = (6S)-NADPHX. Functionally, catalyzes the epimerization of the S- and R-forms of NAD(P)HX, a damaged form of NAD(P)H that is a result of enzymatic or heat-dependent hydration. This is a prerequisite for the S-specific NAD(P)H-hydrate dehydratase to allow the repair of both epimers of NAD(P)HX. The sequence is that of NAD(P)H-hydrate epimerase from Ixodes scapularis (Black-legged tick).